An 842-amino-acid chain; its full sequence is MSRPLSDQDKRKQISVRGLAGVENVSDLKKNFNRHLHFTLVKDRNVATPRDYYFALAHTVRDHLVDRWIRTQQHYYAKDPKRIYYLSLELYMGRTLQNTMVNLALENACDEATYQLGLDMEELEEIEEDAGLGNGGLGRLAACFLDSMATLGLAAYGYGIRYEFGIFNQKICGGWQMEEADDWLRYGNPWEKARPEFTLPVHFYGRVEHTSQGAKWVDTQVVLAMPYDTPVPGYRNNVVNTMRLWSAKAPPYFNLKDFNVGGYIQAVLDRNLAENISRVLYPNDKFFEGKELRLKQEYFVVAATLQDIIRRFKSSKFGCRDPVRTNFDAFPDKVAIQLNDTHPSLAIPELIRILVDLERLDWDKAWDVTVKTCAYTNHTVLPEALERWPVHLMETLLPRHLQIIYEINQRFLNRVAAAFPGDVDRLRRMSLVEEGAVKRINMAHLCIAGSHAVNGVARIHSEILKKTIFKDFYELEPHKFQNKTNGITPRRWLVLCNPGLAEVIAERIGEEYISDLDQLRKLLSYLDDQAFIRDVAKVKQENKLKFSAYLETEYKVHINPNSLFDVQVKRIHEYKRQLLNCLHIITLYNRIKREPNRFMVPRTIMIGGKAAPGYHMAKMIIKLITAIGDVVNHDPAVGDRFRVIFLENYRVSLAEKVIPAADLSEQISTAGTEASGTGNMKFMLNGALTIGTMDGANVEMAEEAGEDNFFIFGMRVEDVERLDQRGYNAQEYYDRIPELRQIIEQLSSGFFSPKQPDLFKDIVNMVMHHDRFKVFADYEEYIKCQDKVSELYKNPREWTRMVIRNIATSGKFSSDRTIAQYAREIWGLEPSRQRLPAPDEKI.

Ser2 is subject to N-acetylserine. Ser15 carries the post-translational modification Phosphoserine; by PHK; in form phosphorylase A. The residue at position 26 (Ser26) is a Phosphoserine. Residues Asp43 and Tyr76 each contribute to the AMP site. 2 positions are modified to phosphotyrosine: Tyr204 and Tyr227. Residue 310 to 319 coordinates AMP; sequence RRFKSSKFGC. Ser430 carries the post-translational modification Phosphoserine. Phosphotyrosine is present on Tyr473. At Ser514 the chain carries Phosphoserine. Lys681 is modified (N6-(pyridoxal phosphate)lysine). Phosphoserine is present on residues Ser747 and Ser748.

Belongs to the glycogen phosphorylase family. In terms of assembly, homodimer. Homotetramer; to form the enzymatically active phosphorylase A. Pyridoxal 5'-phosphate serves as cofactor. In terms of processing, phosphorylation of Ser-15 converts phosphorylase B (unphosphorylated) to phosphorylase A.

It catalyses the reaction [(1-&gt;4)-alpha-D-glucosyl](n) + phosphate = [(1-&gt;4)-alpha-D-glucosyl](n-1) + alpha-D-glucose 1-phosphate. With respect to regulation, allosterically regulated through the non-covalent binding of metabolites, being activated by AMP and inhibited by ATP, ADP, and glucose-6-phosphate. The activity is also controlled by post-translational modifications including phosphorylation. Allosteric enzyme that catalyzes the rate-limiting step in glycogen catabolism, the phosphorolytic cleavage of glycogen to produce glucose-1-phosphate, and plays a central role in maintaining cellular and organismal glucose homeostasis. The polypeptide is Glycogen phosphorylase, muscle form (Rattus norvegicus (Rat)).